The sequence spans 393 residues: DNA-directed RNA polymerase subunit Rpo1C (393 aa).

Belongs to the RNA polymerase beta' chain family. Part of the RNA polymerase complex.

It localises to the cytoplasm. It catalyses the reaction RNA(n) + a ribonucleoside 5'-triphosphate = RNA(n+1) + diphosphate. Functionally, DNA-dependent RNA polymerase (RNAP) catalyzes the transcription of DNA into RNA using the four ribonucleoside triphosphates as substrates. Forms part of the jaw domain. This Thermococcus celer protein is DNA-directed RNA polymerase subunit Rpo1C.